A 335-amino-acid chain; its full sequence is Probable deoxyhypusine synthase (335 aa).

K308 serves as the catalytic Nucleophile.

This sequence belongs to the deoxyhypusine synthase family. It depends on NAD(+) as a cofactor.

The enzyme catalyses [eIF5A protein]-L-lysine + spermidine = [eIF5A protein]-deoxyhypusine + propane-1,3-diamine. The protein operates within protein modification; eIF5A hypusination. Its function is as follows. Catalyzes the NAD-dependent oxidative cleavage of spermidine and the subsequent transfer of the butylamine moiety of spermidine to the epsilon-amino group of a specific lysine residue of the eIF-5A precursor protein to form the intermediate deoxyhypusine residue. In Thermococcus onnurineus (strain NA1), this protein is Probable deoxyhypusine synthase.